A 401-amino-acid polypeptide reads, in one-letter code: Voltage-gated potassium channel subunit beta-1 (401 aa).

Threonine 90, tryptophan 91, glutamine 97, and aspartate 119 together coordinate NADP(+). Tyrosine 124 functions as the Proton donor/acceptor in the catalytic mechanism. NADP(+)-binding residues include asparagine 192, serine 222, arginine 223, glutamine 248, tryptophan 277, serine 278, proline 279, leucine 280, alanine 281, cysteine 282, lysine 288, arginine 298, glycine 357, serine 359, glutamine 363, glutamate 366, and asparagine 367.

Belongs to the shaker potassium channel beta subunit family. In terms of assembly, homotetramer. Interaction with tetrameric potassium channel alpha subunits gives rise to a heterooctamer. Identified in potassium channel complexes containing KCNA1, KCNA2, KCNA4, KCNA5, KCNA6, KCNAB1 and KCNAB2. Part of a complex containing KCNA1, KCNA4 and LGI1; interaction with LGI1 inhibits down-regulation of KCNA1 channel activity. Interacts with the dimer formed by GNB1 and GNG2; this enhances KCNA1 binding. Interacts with SQSTM1.

It localises to the cytoplasm. The protein localises to the membrane. It is found in the cell membrane. It carries out the reaction a primary alcohol + NADP(+) = an aldehyde + NADPH + H(+). The enzyme catalyses a secondary alcohol + NADP(+) = a ketone + NADPH + H(+). Regulatory subunit of the voltage-gated potassium (Kv) channels composed of pore-forming and potassium-conducting alpha subunits and of regulatory beta subunits. The beta-1/KCNAB1 cytoplasmic subunit mediates closure of delayed rectifier potassium channels by physically obstructing the pore via its N-terminal domain and increases the speed of channel closure for other family members. Promotes the inactivation of KCNA1, KCNA2, KCNA4, KCNA5 and KCNA6 alpha subunit-containing channels. Displays nicotinamide adenine dinucleotide phosphate (NADPH)-dependent aldoketoreductase activity by catalyzing the NADPH-dependent reduction of a variety of endogenous aldehydes and ketones. The binding of NADPH is required for efficient down-regulation of potassium channel activity. Oxidation of the bound NADPH restrains N-terminal domain from blocking the channel, thereby decreasing N-type inactivation of potassium channel activity. The polypeptide is Voltage-gated potassium channel subunit beta-1 (KCNAB1) (Bos taurus (Bovine)).